A 164-amino-acid polypeptide reads, in one-letter code: Peptide deformylase (164 aa).

Residues Cys87 and His129 each contribute to the Fe cation site. Residue Glu130 is part of the active site. His133 is a binding site for Fe cation.

The protein belongs to the polypeptide deformylase family. Fe(2+) is required as a cofactor.

It catalyses the reaction N-terminal N-formyl-L-methionyl-[peptide] + H2O = N-terminal L-methionyl-[peptide] + formate. In terms of biological role, removes the formyl group from the N-terminal Met of newly synthesized proteins. Requires at least a dipeptide for an efficient rate of reaction. N-terminal L-methionine is a prerequisite for activity but the enzyme has broad specificity at other positions. The protein is Peptide deformylase of Thermotoga petrophila (strain ATCC BAA-488 / DSM 13995 / JCM 10881 / RKU-1).